Here is a 149-residue protein sequence, read N- to C-terminus: Large ribosomal subunit protein uL15 (149 aa).

The segment at 1-57 (MRLNDPKPKTGSQHRRRRVGRGIAAGQGASCGFGMRGQKSRSGRPTRPGFEGGQNPL) is disordered. Positions 23-35 (IAAGQGASCGFGM) are enriched in gly residues.

It belongs to the universal ribosomal protein uL15 family. Part of the 50S ribosomal subunit.

In terms of biological role, binds to the 23S rRNA. The sequence is that of Large ribosomal subunit protein uL15 from Acaryochloris marina (strain MBIC 11017).